The following is a 481-amino-acid chain: MMRSDISNQISQELNNTNINLNGKSFNDYKFKEPIKDYSRYLSLRNSTPCQLTEVEISTFLASSEILSFGAGIPSKLFFPIKELEFNFNFLGNEKVRLSKEDLDLVQQYSDSPGLPKLRNWCKSIQQRHHGLCDPNTPGKEWNLLMTPGSQHALDCLVKAFFNRGDTLIVERYTYGGMFAVTQPSGINFAACEMDSKGMIPSELDNLLSNWESTHPDLKFPKLIYMIPHGQNPTGILYDMERKEEIYKIACKFDLLIIEDDPHFFLQLDNEIVNGKRVLNKSFLSIDKEDRVIRLDTFSKFLSSGIRMGFVTTNSKLFGVIAFELNASIFHSSGLTQIALEKLLTNWGDEKFDSHVNFVQEVLIRKRRETIELLEKHLKGQVEYSVPKAGLYFWVKLLGIDCSYEFVRDVLRHHKVIFGLGISSSPNRTIKTPYIRVTFSYLEKEDGEVAFKTLSDCLKDYIKNKKIIKHDEDVTLYNNIS.

Lys-300 carries the N6-(pyridoxal phosphate)lysine modification.

Belongs to the class-I pyridoxal-phosphate-dependent aminotransferase family. Pyridoxal 5'-phosphate serves as cofactor.

The protein localises to the cytoplasm. The enzyme catalyses an aromatic L-alpha-amino acid + 2-oxoglutarate = an aromatic oxo-acid + L-glutamate. In terms of biological role, has aromatic amino acid transaminase activity. This chain is Aromatic amino acid aminotransferase DDB_G0272014, found in Dictyostelium discoideum (Social amoeba).